Reading from the N-terminus, the 836-residue chain is Pentatricopeptide repeat-containing protein At2g39620 (836 aa).

PPR repeat units lie at residues 1 to 35 (MPINYTNLLLMLRECKNFRCLLQVHGSLIVSGLKP), 36 to 62 (HNQLINAYSLFQRQDLSRVIFDSVRDP), 63 to 98 (GVVLWNSMIRGYTRAGLHREALGFFGYMSEEKGIDP), 99 to 133 (DKYSFTFALKACAGSMDFKKGLRIHDLIAEMGLES), 134 to 164 (DVYIGTALVEMYCKARDLVSARQVFDKMHVK), 165 to 199 (DVVTWNTMVSGLAQNGCSSAALLLFHDMRSCCVDI), 200 to 230 (DHVSLYNLIPAVSKLEKSDVCRCLHGLVIKK), 233 to 263 (IFAFSSGLIDMYCNCADLYAAESVFEEVWRK), 264 to 298 (DESSWGTMMAAYAHNGFFEEVLELFDLMRNYDVRM), 299 to 333 (NKVAAASALQAAAYVGDLVKGIAIHDYAVQQGLIG), 334 to 364 (DVSVATSLMSMYSKCGELEIAEQLFINIEDR), 365 to 399 (DVVSWSAMIASYEQAGQHDEAISLFRDMMRIHIKP), 400 to 434 (NAVTLTSVLQGCAGVAASRLGKSIHCYAIKADIES), 435 to 465 (ELETATAVISMYAKCGRFSPALKAFERLPIK), 466 to 500 (DAVAFNALAQGYTQIGDANKAFDVYKNMKLHGVCP), 501 to 535 (DSRTMVGMLQTCAFCSDYARGSCVYGQIIKHGFDS), 536 to 566 (ECHVAHALINMFTKCDALAAAIVLFDKCGFE), 568 to 602 (STVSWNIMMNGYLLHGQAEEAVATFRQMKVEKFQP), 603 to 637 (NAVTFVNIVRAAAELSALRVGMSVHSSLIQCGFCS), 638 to 668 (QTPVGNSLVDMYAKCGMIESSEKCFIEISNK), 669 to 703 (YIVSWNTMLSAYAAHGLASCAVSLFLSMQENELKP), 704 to 734 (DSVSFLSVLSACRHAGLVEEGKRIFEEMGER), and 740 to 770 (EVEHYACMVDLLGKAGLFGEAVEMMRRMRVK). Residues 775–836 (VWGALLNSSR…KVPACSWIEV (62 aa)) are type E motif; degenerate.

It belongs to the PPR family. PCMP-E subfamily.

The protein is Pentatricopeptide repeat-containing protein At2g39620 (PCMP-E33) of Arabidopsis thaliana (Mouse-ear cress).